We begin with the raw amino-acid sequence, 466 residues long: 3-isopropylmalate dehydratase large subunit (466 aa).

Residues C347, C407, and C410 each contribute to the [4Fe-4S] cluster site.

This sequence belongs to the aconitase/IPM isomerase family. LeuC type 1 subfamily. Heterodimer of LeuC and LeuD. It depends on [4Fe-4S] cluster as a cofactor.

The catalysed reaction is (2R,3S)-3-isopropylmalate = (2S)-2-isopropylmalate. The protein operates within amino-acid biosynthesis; L-leucine biosynthesis; L-leucine from 3-methyl-2-oxobutanoate: step 2/4. In terms of biological role, catalyzes the isomerization between 2-isopropylmalate and 3-isopropylmalate, via the formation of 2-isopropylmaleate. In Citrobacter koseri (strain ATCC BAA-895 / CDC 4225-83 / SGSC4696), this protein is 3-isopropylmalate dehydratase large subunit.